The sequence spans 506 residues: Maturase K (506 aa).

Belongs to the intron maturase 2 family. MatK subfamily.

It is found in the plastid. Its subcellular location is the chloroplast. In terms of biological role, usually encoded in the trnK tRNA gene intron. Probably assists in splicing its own and other chloroplast group II introns. In Jasminum nudiflorum (Winter jasmine), this protein is Maturase K.